The following is a 548-amino-acid chain: C-type lectin domain family 4 member F (548 aa).

Residues 1–42 lie on the Cytoplasmic side of the membrane; sequence MKEAELNRDMARYCTDNQCVSLQPQGLGPKSAALMAPRTLRH. A helical; Signal-anchor for type II membrane protein membrane pass occupies residues 43 to 69; sequence VQVILALMVVTVIFSLLALFVVASQPW. Residues 70 to 548 lie on the Extracellular side of the membrane; sequence RPEWNKEPPS…STGWSAARVG (479 aa). N-linked (GlcNAc...) asparagine glycosylation is found at N86, N92, N115, N132, N209, and N255. A C-type lectin domain is found at 438-538; the sequence is KFCTSQGAHL…GSSYPWVCKK (101 aa). Disulfide bonds link C440–C536 and C516–C528.

As to expression, kupffer cells.

It localises to the membrane. In terms of biological role, receptor with an affinity for galactose and fucose. Could be involved in endocytosis. The sequence is that of C-type lectin domain family 4 member F (Clec4f) from Mus musculus (Mouse).